The chain runs to 373 residues: GTP cyclohydrolase 1 type 2 homolog (373 aa).

5 residues coordinate a divalent metal cation: His67, His68, Asp106, His333, and Glu336.

Belongs to the GTP cyclohydrolase I type 2/NIF3 family. In terms of assembly, homohexamer.

This is GTP cyclohydrolase 1 type 2 homolog from Listeria innocua serovar 6a (strain ATCC BAA-680 / CLIP 11262).